Reading from the N-terminus, the 215-residue chain is Peroxiredoxin 1 (215 aa).

The Thioredoxin domain maps to 2 to 158 (VKLYSKFPDV…LLRITKAAIV (157 aa)). The active-site Cysteine sulfenic acid (-SOH) intermediate is Cys46. Arg121 is a binding site for substrate.

The protein belongs to the peroxiredoxin family. Prx6 subfamily. As to quaternary structure, homodecamer. Pentamer of dimers that assemble into a ring structure.

Its subcellular location is the cytoplasm. The enzyme catalyses a hydroperoxide + [thioredoxin]-dithiol = an alcohol + [thioredoxin]-disulfide + H2O. Thiol-specific peroxidase that catalyzes the reduction of hydrogen peroxide and organic hydroperoxides to water and alcohols, respectively. Plays a role in cell protection against oxidative stress by detoxifying peroxides. In Sulfurisphaera tokodaii (strain DSM 16993 / JCM 10545 / NBRC 100140 / 7) (Sulfolobus tokodaii), this protein is Peroxiredoxin 1.